The following is a 316-amino-acid chain: MKIANNTVVTEFILLGLTQSQDIQLLVFVLILIFYLIILPGNFLIIFTIRSDPGLTAPLYLFLGNLAFLDASYSFIVAPRMLVDFLSEKKVISYRGCITQLFFLHFLGGGEGLLLVVMAFDRYIAICRPLHCSTVMNPRACYAMMLALWLGGFVHSIIQVVLILRLPFCGPNQLDNFFCDVRQVIKLACTDMFVVELLMVFNSGLMTLLCFLGLLASYAVILCHVRRAASEGKNKAMSTCTTRVIIILLMFGPAIFIYMCPFRALPADKMVSLFHTVIFPLMNPMIYTLRNQEVKTSMKRLLSRHVVCQVDFIIRN.

Residues 1-25 (MKIANNTVVTEFILLGLTQSQDIQL) are Extracellular-facing. An N-linked (GlcNAc...) asparagine glycan is attached at asparagine 5. A helical transmembrane segment spans residues 26–49 (LVFVLILIFYLIILPGNFLIIFTI). Residues 50 to 57 (RSDPGLTA) lie on the Cytoplasmic side of the membrane. Residues 58–79 (PLYLFLGNLAFLDASYSFIVAP) traverse the membrane as a helical segment. Topologically, residues 80-100 (RMLVDFLSEKKVISYRGCITQ) are extracellular. Cysteines 97 and 189 form a disulfide. The chain crosses the membrane as a helical span at residues 101-120 (LFFLHFLGGGEGLLLVVMAF). Residues 121–139 (DRYIAICRPLHCSTVMNPR) are Cytoplasmic-facing. Residues 140-158 (ACYAMMLALWLGGFVHSII) form a helical membrane-spanning segment. The Extracellular portion of the chain corresponds to 159-195 (QVVLILRLPFCGPNQLDNFFCDVRQVIKLACTDMFVV). Residues 196–219 (ELLMVFNSGLMTLLCFLGLLASYA) form a helical membrane-spanning segment. At 220-235 (VILCHVRRAASEGKNK) the chain is on the cytoplasmic side. A helical transmembrane segment spans residues 236–258 (AMSTCTTRVIIILLMFGPAIFIY). The Extracellular portion of the chain corresponds to 259–269 (MCPFRALPADK). A helical transmembrane segment spans residues 270–289 (MVSLFHTVIFPLMNPMIYTL). Residues 290–316 (RNQEVKTSMKRLLSRHVVCQVDFIIRN) are Cytoplasmic-facing.

The protein belongs to the G-protein coupled receptor 1 family.

The protein localises to the cell membrane. In terms of biological role, odorant receptor. The chain is Olfactory receptor 4N4 (OR4N4) from Homo sapiens (Human).